Consider the following 94-residue polypeptide: Co-chaperonin GroES (94 aa).

Belongs to the GroES chaperonin family. Heptamer of 7 subunits arranged in a ring. Interacts with the chaperonin GroEL.

The protein localises to the cytoplasm. In terms of biological role, together with the chaperonin GroEL, plays an essential role in assisting protein folding. The GroEL-GroES system forms a nano-cage that allows encapsulation of the non-native substrate proteins and provides a physical environment optimized to promote and accelerate protein folding. GroES binds to the apical surface of the GroEL ring, thereby capping the opening of the GroEL channel. The sequence is that of Co-chaperonin GroES from Staphylococcus aureus (strain Mu50 / ATCC 700699).